A 302-amino-acid polypeptide reads, in one-letter code: Bifunctional protein FolD (302 aa).

NADP(+) is bound by residues 171–173 (GRS), Ser-196, and Ile-237.

It belongs to the tetrahydrofolate dehydrogenase/cyclohydrolase family. As to quaternary structure, homodimer.

It catalyses the reaction (6R)-5,10-methylene-5,6,7,8-tetrahydrofolate + NADP(+) = (6R)-5,10-methenyltetrahydrofolate + NADPH. The catalysed reaction is (6R)-5,10-methenyltetrahydrofolate + H2O = (6R)-10-formyltetrahydrofolate + H(+). It participates in one-carbon metabolism; tetrahydrofolate interconversion. In terms of biological role, catalyzes the oxidation of 5,10-methylenetetrahydrofolate to 5,10-methenyltetrahydrofolate and then the hydrolysis of 5,10-methenyltetrahydrofolate to 10-formyltetrahydrofolate. In Sphingopyxis alaskensis (strain DSM 13593 / LMG 18877 / RB2256) (Sphingomonas alaskensis), this protein is Bifunctional protein FolD.